Here is a 216-residue protein sequence, read N- to C-terminus: Probable GTP-binding protein EngB (216 aa).

An EngB-type G domain is found at 43-216 (DRLEVCFAGR…TLRSIITDLT (174 aa)). GTP contacts are provided by residues 51–58 (GRSNVGKS), 78–82 (GRTQE), 96–99 (DLPG), 163–166 (TKAD), and 197–199 (TSS). Positions 58 and 80 each coordinate Mg(2+).

This sequence belongs to the TRAFAC class TrmE-Era-EngA-EngB-Septin-like GTPase superfamily. EngB GTPase family. Mg(2+) is required as a cofactor.

Its function is as follows. Necessary for normal cell division and for the maintenance of normal septation. This is Probable GTP-binding protein EngB from Roseobacter denitrificans (strain ATCC 33942 / OCh 114) (Erythrobacter sp. (strain OCh 114)).